Reading from the N-terminus, the 454-residue chain is Flagellar hook protein FlgE (454 aa).

Belongs to the flagella basal body rod proteins family.

It is found in the bacterial flagellum basal body. Functionally, a flexible structure which links the flagellar filament to the drive apparatus in the basal body. Absence of the gene leads to absence of the hook protein, lack of the flagellar filament and thus loss of mobility. Approximately wild-type levels of the flagellar subunits are still produced and accumulate mostly in the cytosol. This is Flagellar hook protein FlgE (flgE) from Helicobacter mustelae.